A 314-amino-acid polypeptide reads, in one-letter code: Methionyl-tRNA formyltransferase (314 aa).

113–116 contributes to the (6S)-5,6,7,8-tetrahydrofolate binding site; that stretch reads SILP.

It belongs to the Fmt family.

It catalyses the reaction L-methionyl-tRNA(fMet) + (6R)-10-formyltetrahydrofolate = N-formyl-L-methionyl-tRNA(fMet) + (6S)-5,6,7,8-tetrahydrofolate + H(+). In terms of biological role, attaches a formyl group to the free amino group of methionyl-tRNA(fMet). The formyl group appears to play a dual role in the initiator identity of N-formylmethionyl-tRNA by promoting its recognition by IF2 and preventing the misappropriation of this tRNA by the elongation apparatus. This is Methionyl-tRNA formyltransferase from Photobacterium profundum (strain SS9).